Reading from the N-terminus, the 364-residue chain is MLPANGQTAVIQSKTSSHGLPLVVAHGRPLPPLPTPYHVRVRVLAVGLNPTDYKMVTHFFMQDNTAGCDFCGIVEEAGPQSVLGLGLRVCGADFPYRPSNPYNGAFAEYATADSRHLLRIPDGVSDLQAAGIGAIGWGTAALAISDPAALDLPGLPSRPDSRGLPVLVYGGATATGIMAIQMLKLSGYSPIAVCSESSAPLCMSLGAIGTASYTSVTCAEDIKAIAKGSKIKHALDCITDVESMAICLASLSRTGGRYACLEAFPDAWLTRRAIAVKVVMGFEGQNVDVDLGHPVYTRKANPALHAVAGEWARELQLLLNDGQIKTQPMQEIGGSFEGVIKALEMLQRGDVKGKKLAIRIAYSK.

51–54 (TDYK) contacts NADP(+). 137–144 (WGTAALAI) provides a ligand contact to substrate. Residues 172-175 (ATAT), 195-198 (SESS), tyrosine 213, and 261-262 (LE) each bind NADP(+). 281-285 (GFEGQ) lines the substrate pocket. 351–352 (VK) provides a ligand contact to NADP(+).

It belongs to the zinc-containing alcohol dehydrogenase family. As to quaternary structure, monomer.

It catalyses the reaction 7 malonyl-CoA + acetyl-CoA + 10 AH2 + 5 S-adenosyl-L-methionine + 2 H(+) = dehydroprobetaenone I + 10 A + 5 S-adenosyl-L-homocysteine + 7 CO2 + 8 CoA + 6 H2O. The protein operates within mycotoxin biosynthesis. Functionally, trans-enoyl reductase; part of the gene cluster that mediates the biosynthesis of the phytotoxin stemphyloxin II. The first step of the pathway is the synthesis of dehydroprobetaenone I by the polyketide synthase sthA and the enoyl reductase sthE via condensation of one acetyl-CoA starter unit with 7 malonyl-CoA units and 5 methylations. The C-terminal reductase (R) domain of sthA catalyzes the reductive release of the polyketide chain. Because sthA lacks a designated enoylreductase (ER) domain, the required activity is provided the enoyl reductase sthE. The short-chain dehydrogenase/reductase sthC then catalyzes reduction of dehydroprobetaenone I to probetaenone I. The cytochrome P450 monooxygenase sthF catalyzes successive epoxidation, oxidation (resulting from epoxide opening) and hydroxylation to install a tertiary alcohol in the decaline ring to yield betaenone C from dehydroprobetaenone I and betaenone B from probetaenone I. The FAD-linked oxidoreductase sthB is responsible for the conversion of betaenone C to betaenone A via an intramolecular aldol reaction between C-1 and C-17 to form the bridged tricyclic system in betaenone A. Finally, the cytochrome P450 monooxygenase sthD catalyzes the hydroxylation of C-15 to afford the final metabolite stemphyloxin II. This chain is Trans-enoyl reductase sthE, found in Phaeosphaeria nodorum (strain SN15 / ATCC MYA-4574 / FGSC 10173) (Glume blotch fungus).